Reading from the N-terminus, the 169-residue chain is Histone H1.9 (169 aa).

Composition is skewed to polar residues over residues 1 to 10 and 19 to 36; these read MSLVSPSPDS and DASTSQVPSQSESKIGPN. The tract at residues 1-36 is disordered; that stretch reads MSLVSPSPDSNAVMAGDQDASTSQVPSQSESKIGPN. An H15 domain is found at 43-116; the sequence is RKPTMSKVIL…GASGSFRLGK (74 aa). Residues Ser62 and Ser65 each carry the phosphoserine modification. The segment covering 118–142 has biased composition (basic residues); the sequence is QAFKSKCKAKRRQRRQKPGQRRTGS. A disordered region spans residues 118 to 154; the sequence is QAFKSKCKAKRRQRRQKPGQRRTGSRRSLLGSKKSNN.

The protein belongs to the histone H1/H5 family.

It is found in the nucleus. The protein resides in the chromosome. In terms of biological role, DNA-binding protein that may be implicated in chromatin remodeling and/or transcriptional regulation during spermiogenesis, the process of spermatid maturation into spermatozoa. This is Histone H1.9 from Rattus norvegicus (Rat).